The primary structure comprises 221 residues: uncharacterized protein (221 aa).

Residues 1 to 189 (MDSGKDTNGY…NVVYCSEKAV (189 aa)) enclose the Peptidase S8 domain.

The protein belongs to the peptidase S8 family.

This is an uncharacterized protein from Aquifex aeolicus (strain VF5).